The following is a 331-amino-acid chain: Benzylsuccinate synthase activating enzyme (331 aa).

Positions 15 to 315 (QDGPGIRTTI…VTIGGIVGIA (301 aa)) constitute a Radical SAM core domain. Positions 29, 33, 36, 55, 58, 61, 65, 89, 92, 95, and 99 each coordinate [4Fe-4S] cluster. 35 to 37 (WCH) is an S-adenosyl-L-methionine binding site. 4Fe-4S ferredoxin-type domains are found at residues 46-75 (QEFYFYPDRCVGCGRCVAVCPAETSRLVRN) and 80-109 (TIVQIDRTNCQRCMRCVAACLTEARAIVGQ). S-adenosyl-L-methionine is bound by residues glycine 139, 189-191 (DLK), and histidine 263.

Belongs to the organic radical-activating enzymes family. The cofactor is [4Fe-4S] cluster.

It carries out the reaction glycyl-[protein] + reduced [flavodoxin] + S-adenosyl-L-methionine = glycin-2-yl radical-[protein] + semiquinone [flavodoxin] + 5'-deoxyadenosine + L-methionine + H(+). It functions in the pathway xenobiotic degradation; toluene degradation [regulation]. Functionally, activation of benzylsuccinate synthase under anaerobic conditions by generation of an organic free radical, using S-adenosylmethionine and reduced flavodoxin as cosubstrates to produce 5'-deoxy-adenosine. This Thauera aromatica protein is Benzylsuccinate synthase activating enzyme (bssD).